Here is a 223-residue protein sequence, read N- to C-terminus: MGQKVHPHGLRVGVIKEWDAKWYADKKNFADNLVEDHKIRNFVKKNSYAAGVSRIEIERAAKRIKLNIYTAKPGMIIGKGGQGIESLKNQLQKIVSNKNILINIVEVKRPEADAQLIAENIAQQLEKRIAFRRAMKQSIQRAMKSGVKGIKTACSGRLAGAEIARTEHYNEGTIPLQTLRADIDYGFAEADTTYGKIGVKVWVYKGEVLPARKNINEKEEANA.

Positions 39–108 constitute a KH type-2 domain; the sequence is IRNFVKKNSY…NILINIVEVK (70 aa).

Belongs to the universal ribosomal protein uS3 family. As to quaternary structure, part of the 30S ribosomal subunit. Forms a tight complex with proteins S10 and S14.

In terms of biological role, binds the lower part of the 30S subunit head. Binds mRNA in the 70S ribosome, positioning it for translation. In Clostridium botulinum (strain 657 / Type Ba4), this protein is Small ribosomal subunit protein uS3.